A 183-amino-acid polypeptide reads, in one-letter code: Hypoxanthine/guanine phosphoribosyltransferase (183 aa).

This sequence belongs to the purine/pyrimidine phosphoribosyltransferase family. Archaeal HPRT subfamily. Homodimer.

It localises to the cytoplasm. The enzyme catalyses IMP + diphosphate = hypoxanthine + 5-phospho-alpha-D-ribose 1-diphosphate. It catalyses the reaction GMP + diphosphate = guanine + 5-phospho-alpha-D-ribose 1-diphosphate. It functions in the pathway purine metabolism; IMP biosynthesis via salvage pathway; IMP from hypoxanthine: step 1/1. Functionally, catalyzes a salvage reaction resulting in the formation of IMP that is energically less costly than de novo synthesis. The chain is Hypoxanthine/guanine phosphoribosyltransferase from Methanothermococcus okinawensis (strain DSM 14208 / JCM 11175 / IH1).